The primary structure comprises 460 residues: Elongation factor 1-alpha (460 aa).

Gly2 bears the N,N,N-trimethylglycine mark. Lys3 bears the N6,N6-dimethyllysine; alternate mark. Residue Lys3 is modified to N6-methyllysine; alternate. A tr-type G domain is found at 6 to 241 (KQHINIVVIG…DAIEPPVRPT (236 aa)). A G1 region spans residues 15-22 (GHVDSGKS). Residue 15–22 (GHVDSGKS) coordinates GTP. At Lys31 the chain carries N6-methyllysine. Positions 71 to 75 (GITID) are G2. Residue Lys80 is modified to N6,N6,N6-trimethyllysine. Positions 92 to 95 (DAPG) are G3. Residues 92-96 (DAPGH) and 154-157 (NKMD) contribute to the GTP site. The G4 stretch occupies residues 154–157 (NKMD). Positions 193–195 (SGF) are G5. An N6,N6-dimethyllysine; alternate modification is found at Lys317. The residue at position 317 (Lys317) is an N6-methyllysine; alternate. Lys391 is subject to N6-methyllysine.

The protein belongs to the TRAFAC class translation factor GTPase superfamily. Classic translation factor GTPase family. EF-Tu/EF-1A subfamily.

It is found in the cytoplasm. This protein promotes the GTP-dependent binding of aminoacyl-tRNA to the A-site of ribosomes during protein biosynthesis. In Aspergillus oryzae (strain ATCC 42149 / RIB 40) (Yellow koji mold), this protein is Elongation factor 1-alpha (tef1).